Reading from the N-terminus, the 764-residue chain is 1,4-alpha-glucan branching enzyme GlgB (764 aa).

The active-site Nucleophile is the D434. The active-site Proton donor is E487.

This sequence belongs to the glycosyl hydrolase 13 family. GlgB subfamily. In terms of assembly, monomer.

The enzyme catalyses Transfers a segment of a (1-&gt;4)-alpha-D-glucan chain to a primary hydroxy group in a similar glucan chain.. It functions in the pathway glycan biosynthesis; glycogen biosynthesis. Functionally, catalyzes the formation of the alpha-1,6-glucosidic linkages in glycogen by scission of a 1,4-alpha-linked oligosaccharide from growing alpha-1,4-glucan chains and the subsequent attachment of the oligosaccharide to the alpha-1,6 position. The chain is 1,4-alpha-glucan branching enzyme GlgB from Trichormus variabilis (strain ATCC 29413 / PCC 7937) (Anabaena variabilis).